Consider the following 88-residue polypeptide: MLATDKKQEIIGAYKLHDSDTGSPEVQIAILTERITYLTEHFKTHKKDHHSRRGLLKIVGQRRGLLDYLKKKDVERYRSIIEKLGIRR.

Belongs to the universal ribosomal protein uS15 family. As to quaternary structure, part of the 30S ribosomal subunit. Forms a bridge to the 50S subunit in the 70S ribosome, contacting the 23S rRNA.

In terms of biological role, one of the primary rRNA binding proteins, it binds directly to 16S rRNA where it helps nucleate assembly of the platform of the 30S subunit by binding and bridging several RNA helices of the 16S rRNA. Its function is as follows. Forms an intersubunit bridge (bridge B4) with the 23S rRNA of the 50S subunit in the ribosome. The sequence is that of Small ribosomal subunit protein uS15 from Geotalea daltonii (strain DSM 22248 / JCM 15807 / FRC-32) (Geobacter daltonii).